The chain runs to 80 residues: Large ribosomal subunit protein uL24 (80 aa).

Residues 53-80 (HMRPTQSNPQGSIIEREFPIHASNVKKS) form a disordered region.

Belongs to the universal ribosomal protein uL24 family. Part of the 50S ribosomal subunit.

One of two assembly initiator proteins, it binds directly to the 5'-end of the 23S rRNA, where it nucleates assembly of the 50S subunit. Functionally, one of the proteins that surrounds the polypeptide exit tunnel on the outside of the subunit. This Chlorobium luteolum (strain DSM 273 / BCRC 81028 / 2530) (Pelodictyon luteolum) protein is Large ribosomal subunit protein uL24.